Consider the following 216-residue polypeptide: Transmembrane protein 186 (216 aa).

Residues 1–68 (MAFLLRAVPR…IYRFNAIRAL (68 aa)) are Mitochondrial matrix-facing. Residues 69 to 91 (GFLSRLKLAQTAVTVVALPPGFY) traverse the membrane as a helical segment. Topologically, residues 92-103 (CYSQGLMTLSSL) are mitochondrial intermembrane. The helical transmembrane segment at 104–124 (GLMSGIASFALVMLCWMSHFF) threads the bilayer. The Mitochondrial matrix portion of the chain corresponds to 125–216 (RRLVGILYVN…GTLATLKNSK (92 aa)).

Belongs to the TMEM186 family. As to quaternary structure, part of the mitochondrial complex I assembly/MCIA complex that comprises at least the core subunits TMEM126B, NDUFAF1, ECSIT and ACAD9 and complement subunits such as COA1 and TMEM186. Interacts with MT-ND3.

The protein localises to the mitochondrion inner membrane. Functionally, as part of the MCIA complex, required for efficient assembly of the mitochondrial complex I. This Rattus norvegicus (Rat) protein is Transmembrane protein 186.